A 503-amino-acid chain; its full sequence is DEAD-box ATP-dependent RNA helicase CshA (503 aa).

The Q motif signature appears at 2 to 30; the sequence is QNFKELGISDKTVETLEAMGFKEPTPIQK. Positions 33 to 203 constitute a Helicase ATP-binding domain; it reads IPYTLEGKDI…QQFMKSPQIV (171 aa). 46–53 lines the ATP pocket; sequence AQTGTGKT. Residues 150–153 carry the DEAD box motif; that stretch reads DEAD. A Helicase C-terminal domain is found at 214 to 375; the sequence is QIDEYYTIVK…LRPPHRKEVL (162 aa). Positions 436-503 are disordered; that stretch reads EKPLARKNRQ…KGRTFADLQK (68 aa). Basic residues predominate over residues 466–480; that stretch reads KRSKGNFNKKKGKKT. The span at 481 to 490 shows a compositional bias: basic and acidic residues; it reads DRRERQDKGR.

It belongs to the DEAD box helicase family. CshA subfamily. Oligomerizes, may be a member of the RNA degradosome.

The protein localises to the cytoplasm. The catalysed reaction is ATP + H2O = ADP + phosphate + H(+). Functionally, DEAD-box RNA helicase possibly involved in RNA degradation. Unwinds dsRNA in both 5'- and 3'-directions, has RNA-dependent ATPase activity. The sequence is that of DEAD-box ATP-dependent RNA helicase CshA from Staphylococcus haemolyticus (strain JCSC1435).